The chain runs to 227 residues: Ion-translocating oxidoreductase complex subunit E (227 aa).

6 helical membrane passes run Ala18 to Ala38, Leu39 to Val59, Ile69 to Ala89, Gly93 to Gly113, Leu125 to Leu145, and His182 to Leu202.

This sequence belongs to the NqrDE/RnfAE family. The complex is composed of six subunits: RnfA, RnfB, RnfC, RnfD, RnfE and RnfG.

It localises to the cell inner membrane. In terms of biological role, part of a membrane-bound complex that couples electron transfer with translocation of ions across the membrane. The sequence is that of Ion-translocating oxidoreductase complex subunit E from Aliivibrio fischeri (strain MJ11) (Vibrio fischeri).